Consider the following 187-residue polypeptide: Protein TIFY 3B (187 aa).

Residues 1–10 are compositionally biased toward basic and acidic residues; sequence MTKVKDEPRA. The segment at 1 to 50 is disordered; sequence MTKVKDEPRASVEGGCGVADGDGGAAEIGGTGSVEKSINEVRSTEIQTAE. Positions 14-32 are enriched in gly residues; it reads GGCGVADGDGGAAEIGGTG. A Tify domain is found at 51–86; it reads PTVPPNQLTIFFGGSVTVFDGLPSEKVQEILRIAAK. The short motif at 139–163 is the Jas element; that stretch reads PIARRHSLQRFLEKRRDRLVNKNPY. Residues 141–148 carry the Nuclear localization signal motif; that stretch reads ARRHSLQR. The tract at residues 152-187 is disordered; the sequence is KRRDRLVNKNPYPTSDFKKTDVPTGNVSIKEEFPTA.

It belongs to the TIFY/JAZ family. As to quaternary structure, interacts with MYC2, AFPH2/NINJA, TIFY10A/JAZ1, TIFY10B/JAZ2, TIFY11A/JAZ5, TIFY11B/JAZ6, TIFY5A/JAZ8 and TIFY9/JAZ10. In terms of assembly, (Microbial infection) Interacts with the pathogenic Pseudomonas syringae HopZ1a protein. Post-translationally, (Microbial infection) Acetylated by Pseudomonas syringae HopZ1a. Ubiquitinated. Targeted for degradation by the SCF(COI1) E3 ubiquitin ligase-proteasome pathway during jasmonate signaling.

It localises to the nucleus. Functionally, repressor of jasmonate responses. The sequence is that of Protein TIFY 3B from Arabidopsis thaliana (Mouse-ear cress).